We begin with the raw amino-acid sequence, 431 residues long: Aspartate--tRNA(Asp/Asn) ligase (431 aa).

Residue E170 participates in L-aspartate binding. Residues 192-195 (QLYK) form an aspartate region. R214 serves as a coordination point for L-aspartate. Residues 214–216 (RAE), 222–224 (RHL), and E354 contribute to the ATP site. 2 residues coordinate Mg(2+): E354 and S357. Residues S357 and R361 each coordinate L-aspartate. 402-405 (GLER) lines the ATP pocket.

This sequence belongs to the class-II aminoacyl-tRNA synthetase family. Type 2 subfamily. Homodimer. The cofactor is Mg(2+).

Its subcellular location is the cytoplasm. The enzyme catalyses tRNA(Asx) + L-aspartate + ATP = L-aspartyl-tRNA(Asx) + AMP + diphosphate. In terms of biological role, aspartyl-tRNA synthetase with relaxed tRNA specificity since it is able to aspartylate not only its cognate tRNA(Asp) but also tRNA(Asn). Reaction proceeds in two steps: L-aspartate is first activated by ATP to form Asp-AMP and then transferred to the acceptor end of tRNA(Asp/Asn). This Methanopyrus kandleri (strain AV19 / DSM 6324 / JCM 9639 / NBRC 100938) protein is Aspartate--tRNA(Asp/Asn) ligase.